We begin with the raw amino-acid sequence, 599 residues long: Beta-(1--&gt;2)glucan export ATP-binding/permease protein NdvA (599 aa).

The 281-residue stretch at 21 to 301 (TITMCVASVL…ISAFINQTVT (281 aa)) folds into the ABC transmembrane type-1 domain. A run of 5 helical transmembrane segments spans residues 22 to 42 (ITMCVASVLVALVTLAEPVLF), 55 to 75 (IFSPLLMWAALGGFNIMAAVF), 156 to 176 (MRMSLVLIVLGVIYVMIGQLV), 248 to 268 (MASTFSMVVVLVLGAYFVTKG), and 276 to 296 (IAFIGFAQLMIGRLDQISAFI). The region spanning 335–569 (IVFDNVTYEF…GGRFSDLLRA (235 aa)) is the ABC transporter domain. 368–375 (GPTGAGKT) contributes to the ATP binding site.

It belongs to the ABC transporter superfamily. Beta-(1--&gt;2)glucan exporter (TC 3.A.1.108.1) family. As to quaternary structure, homodimer.

It localises to the cell inner membrane. The enzyme catalyses [(1-&gt;2)-beta-D-glucosyl](n)(in) + ATP + H2O = [(1-&gt;2)-beta-D-glucosyl](n)(out) + ADP + phosphate + H(+). Functionally, involved in beta-(1--&gt;2)glucan export. Transmembrane domains (TMD) form a pore in the inner membrane and the ATP-binding domain (NBD) is responsible for energy generation. The polypeptide is Beta-(1--&gt;2)glucan export ATP-binding/permease protein NdvA (Brucella melitensis biotype 1 (strain ATCC 23456 / CCUG 17765 / NCTC 10094 / 16M)).